A 347-amino-acid chain; its full sequence is tRNA(Ile)-lysidine synthase (347 aa).

An ATP-binding site is contributed by 27-32 (SGGADS). Residues 243-263 (AAPASPSHVEGEASAPHDAAH) form a disordered region.

This sequence belongs to the tRNA(Ile)-lysidine synthase family.

The protein resides in the cytoplasm. It carries out the reaction cytidine(34) in tRNA(Ile2) + L-lysine + ATP = lysidine(34) in tRNA(Ile2) + AMP + diphosphate + H(+). In terms of biological role, ligates lysine onto the cytidine present at position 34 of the AUA codon-specific tRNA(Ile) that contains the anticodon CAU, in an ATP-dependent manner. Cytidine is converted to lysidine, thus changing the amino acid specificity of the tRNA from methionine to isoleucine. This chain is tRNA(Ile)-lysidine synthase, found in Nitratidesulfovibrio vulgaris (strain ATCC 29579 / DSM 644 / CCUG 34227 / NCIMB 8303 / VKM B-1760 / Hildenborough) (Desulfovibrio vulgaris).